The following is a 971-amino-acid chain: Protein cwh43 (971 aa).

A PGAP2-like region spans residues 1–242 (MTEKTSSLVF…PSSFATRKKE (242 aa)). 19 helical membrane passes run 15-35 (VALV…ALAL), 71-91 (VFQW…LLWF), 101-121 (VIIT…WVYV), 129-149 (WHDI…ILVS), 161-181 (IRNI…YWYI), 188-208 (IPGA…WDIL), 286-306 (VYLS…VWYF), 313-333 (ISGY…GIPL), 336-356 (KFAS…IAAY), 366-386 (FVTA…FSNI), 397-417 (ISTF…FFSN), 432-452 (QIPA…FHVQ), 467-487 (ITAL…HTFL), 509-529 (YPHG…APYL), 532-552 (SGAF…FMYI), 555-575 (GWCS…YSFA), 588-608 (VWGG…WVVA), 622-642 (TSYI…AYSG), and 673-693 (LLTG…NMPP). The interval 243 to 971 (KGEHLSYAEA…LVVHEPWYYD (729 aa)) is PGAP2IP-like. H826 is an active-site residue.

It in the N-terminal section; belongs to the PGAP2 family. This sequence in the C-terminal section; belongs to the PGAP2IP family.

The protein resides in the cell membrane. The protein localises to the endoplasmic reticulum membrane. In terms of biological role, involved in the maintenance of cell wall integrity. Required for the replacement of the diacylglycerol moiety by ceramides during GPI-anchor maturation. The sequence is that of Protein cwh43 (cwh43) from Schizosaccharomyces pombe (strain 972 / ATCC 24843) (Fission yeast).